A 358-amino-acid chain; its full sequence is Alternative oxidase, mitochondrial (358 aa).

A helical membrane pass occupies residues 152-172 (LIRYVFLESVAGVPGMVAGML). The Fe cation site is built by E159, E198, and H201. The chain crosses the membrane as a helical span at residues 218-238 (MILGAQGVFFNSFFLCYLFSP). Residues E249, E306, and H309 each coordinate Fe cation.

It belongs to the alternative oxidase family. Requires Fe cation as cofactor.

It localises to the mitochondrion inner membrane. Its function is as follows. Catalyzes cyanide-resistant oxygen consumption. May increase respiration when the cytochrome respiratory pathway is restricted, or in response to low temperatures. This chain is Alternative oxidase, mitochondrial (AOX1), found in Monilinia fructicola (Brown rot fungus).